The following is a 158-amino-acid chain: 6,7-dimethyl-8-ribityllumazine synthase (158 aa).

5-amino-6-(D-ribitylamino)uracil-binding positions include F22, 57–59 (AVE), and 81–83 (AVI). Residue 86–87 (GT) participates in (2S)-2-hydroxy-3-oxobutyl phosphate binding. H89 functions as the Proton donor in the catalytic mechanism. F114 provides a ligand contact to 5-amino-6-(D-ribitylamino)uracil. R128 contacts (2S)-2-hydroxy-3-oxobutyl phosphate.

The protein belongs to the DMRL synthase family. In terms of assembly, forms an icosahedral capsid composed of 60 subunits, arranged as a dodecamer of pentamers.

It catalyses the reaction (2S)-2-hydroxy-3-oxobutyl phosphate + 5-amino-6-(D-ribitylamino)uracil = 6,7-dimethyl-8-(1-D-ribityl)lumazine + phosphate + 2 H2O + H(+). It functions in the pathway cofactor biosynthesis; riboflavin biosynthesis; riboflavin from 2-hydroxy-3-oxobutyl phosphate and 5-amino-6-(D-ribitylamino)uracil: step 1/2. Catalyzes the formation of 6,7-dimethyl-8-ribityllumazine by condensation of 5-amino-6-(D-ribitylamino)uracil with 3,4-dihydroxy-2-butanone 4-phosphate. This is the penultimate step in the biosynthesis of riboflavin. This is 6,7-dimethyl-8-ribityllumazine synthase from Shewanella loihica (strain ATCC BAA-1088 / PV-4).